Here is an 88-residue protein sequence, read N- to C-terminus: Acyl-CoA-binding domain-containing protein 7 (88 aa).

One can recognise an ACB domain in the interval 3–88 (LQADFDRAAE…AKELIEKYGI (86 aa)). An acyl-CoA-binding positions include Arg-15, 30–34 (YGLYK), Lys-56, and Tyr-75.

Belongs to the ACBD7 family.

Functionally, binds medium- and long-chain acyl-CoA esters. This is Acyl-CoA-binding domain-containing protein 7 (ACBD7) from Homo sapiens (Human).